Here is a 360-residue protein sequence, read N- to C-terminus: Glutamate 5-kinase (360 aa).

Lys7 lines the ATP pocket. The substrate site is built by Ser47, Asp134, and Asn146. ATP-binding positions include 166-167 and 210-216; these read TD and TGGITTK. The PUA domain maps to 275 to 348; the sequence is VGQITLDEGA…LNKKENINSS (74 aa).

The protein belongs to the glutamate 5-kinase family.

It localises to the cytoplasm. It carries out the reaction L-glutamate + ATP = L-glutamyl 5-phosphate + ADP. Its pathway is amino-acid biosynthesis; L-proline biosynthesis; L-glutamate 5-semialdehyde from L-glutamate: step 1/2. Its function is as follows. Catalyzes the transfer of a phosphate group to glutamate to form L-glutamate 5-phosphate. The sequence is that of Glutamate 5-kinase from Prochlorococcus marinus subsp. pastoris (strain CCMP1986 / NIES-2087 / MED4).